Here is a 289-residue protein sequence, read N- to C-terminus: Glycerol facilitator-aquaporin gla (289 aa).

Helical transmembrane passes span 10–30 and 41–61; these read ITEFVGTALLIIMGNGAVANV and SWMIIGWGYGLGVMLPAVAFG. An NPA 1 motif is present at residues 68–70; it reads NPA. Transmembrane regions (helical) follow at residues 87 to 107, 151 to 171, and 209 to 229; these read AQYIIAQVLGAMFGQLLIVMV, FVGSFVLFFGAVAATNIFFGS, and MVAHLFLGFLVMGLVVALGGP. The NPA 2 signature appears at 235–237; that stretch reads NPA. A helical transmembrane segment spans residues 264-284; that stretch reads WYAWVPVLAPILASLAAVALF.

The protein belongs to the MIP/aquaporin (TC 1.A.8) family.

Its subcellular location is the cell membrane. In terms of biological role, mixed channel protein that transports both water and glycerol. This Lactococcus lactis subsp. lactis (strain IL1403) (Streptococcus lactis) protein is Glycerol facilitator-aquaporin gla (gla).